A 99-amino-acid polypeptide reads, in one-letter code: Large ribosomal subunit protein uL23 (99 aa).

Belongs to the universal ribosomal protein uL23 family. As to quaternary structure, part of the 50S ribosomal subunit. Contacts protein L29, and trigger factor when it is bound to the ribosome.

Its function is as follows. One of the early assembly proteins it binds 23S rRNA. One of the proteins that surrounds the polypeptide exit tunnel on the outside of the ribosome. Forms the main docking site for trigger factor binding to the ribosome. The polypeptide is Large ribosomal subunit protein uL23 (Blochmanniella floridana).